The following is a 3674-amino-acid chain: Dystrophin-1 (3674 aa).

The segment at 1–25 is disordered; that stretch reads MLFSGASTAKPKKDEKKDKKSDRDP. The span at 11–25 shows a compositional bias: basic and acidic residues; it reads PKKDEKKDKKSDRDP. An actin-binding region spans residues 30–39; it reads QEWVFVRWAN. Positions 129–234 constitute a Calponin-homology (CH) domain; sequence EKLSEAIKQW…YLMSLYLAMI (106 aa). A disordered region spans residues 265–325; the sequence is SQPSTSSSSA…KSGKSKKARR (61 aa). Spectrin repeat units follow at residues 327-435, 436-541, and 612-656; these read EQLA…VLQQ, QIHL…KLDG, and CELV…TLVK. Positions 655-674 are enriched in basic and acidic residues; sequence VKSGKADVKQVQESQNEQKE. Disordered stretches follow at residues 655–689, 968–991, 1587–1606, 1796–1833, and 2387–2466; these read VKSG…TEGE, NSQM…EKRR, ASAE…SSPS, LSAT…SRSS, and MNDS…GSTG. Over residues 675–685 the composition is skewed to polar residues; it reads QPASSEGLSTD. Residues 975–991 are compositionally biased toward basic and acidic residues; the sequence is TVEKAETRKAEMEEKRR. The segment covering 1796–1830 has biased composition (basic and acidic residues); the sequence is LSATEKKPVETVKSTIPDRPEVPEEPEKSSPDRTS. Over residues 2391–2411 the composition is skewed to polar residues; that stretch reads GGDTTESRSTVVEMTSVHTKQ. 4 Spectrin repeats span residues 2576-2673, 2725-2789, 2792-2905, and 2926-3032; these read RNEM…VLEA, FKTL…RLEK, QEWE…RLKK, and QRLQ…AVRN. The WW domain maps to 3047-3081; sequence QSVTLPWQRAISKSNLLPYYIEQTSEKTQWEHPVW. The segment at 3301-3357 adopts a ZZ-type zinc-finger fold; that stretch reads KHASKCNVCKMFPIIGIRYRCLTCFNCDLCQNCFFSQRTAKSHRTNHPMQEYCEKTT. Residues cysteine 3306, cysteine 3309, cysteine 3321, cysteine 3324, cysteine 3330, cysteine 3333, histidine 3343, and histidine 3347 each contribute to the Zn(2+) site. Disordered stretches follow at residues 3481–3522 and 3568–3645; these read STME…TQSQ and KQQA…QMQN. A compositionally biased stretch (polar residues) spans 3568-3579; it reads KQQAPLSTNSLL.

Component of the dystrophin glycoprotein complex (DGC). Interacts with dyb-1 and stn-1 to form the DGC. Interacts with stn-2. As to expression, expressed in body wall, head, pharyngeal and vulval muscles, from late embryogenesis to adulthood (at protein level).

It localises to the cell membrane. It is found in the sarcolemma. Its subcellular location is the cytoplasm. The protein resides in the cytoskeleton. Functionally, plays a role in cholinergic transmission and as a functional partner of dystrobrevin (dyb-1), necessary for muscle maintenance. Required for neuronal positioning. May play a role in the localization of slo-1 near dense bodies in the muscle. This chain is Dystrophin-1 (dys-1), found in Caenorhabditis elegans.